The primary structure comprises 318 residues: Vomeronasal type-1 receptor A11 (318 aa).

At 1–32 (MSEILFFSPQPLFSHMMNKNSRLHTHSNIKNT) the chain is on the extracellular side. The chain crosses the membrane as a helical span at residues 33-53 (FFSEIGIGISGNSFLLLFHIL). The Cytoplasmic portion of the chain corresponds to 54–65 (KFIRGHRPRLTD). A helical membrane pass occupies residues 66-86 (LPIGLLSLIHLLMLLLMAFIA). Topologically, residues 87–101 (TDIFISRRGWDGIIC) are extracellular. An intrachain disulfide couples cysteine 101 to cysteine 188. A helical transmembrane segment spans residues 102-118 (KFLVYLYGVLRGLSLCT). The Cytoplasmic segment spans residues 119–147 (TSMLSVLQAIILSPRSSCLAKLKHKSPHH). A helical transmembrane segment spans residues 148–168 (ISCAIIFLSVLYMLISSHILL). Over 169–206 (SITATPNLTMNDFLYVSQSCSLLPLSYLVQSMYSTLLA) the chain is Extracellular. The N-linked (GlcNAc...) asparagine glycan is linked to asparagine 175. A helical membrane pass occupies residues 207-227 (LREVFLISLMVLSTLYMVVLL). The Cytoplasmic portion of the chain corresponds to 228–254 (CRHRKQAQHLQGTSLSPKASAEQRATQ). Residues 255 to 275 (TILMLMTFFVLMSIFDSIVSC) traverse the membrane as a helical segment. Over 276 to 285 (SRTMFLDDPT) the chain is Extracellular. Residues 286 to 306 (SYSIHIFVMHIYATVSPFVFM) traverse the membrane as a helical segment. Residues 307-318 (STEKHIVNILRG) are Cytoplasmic-facing.

Belongs to the G-protein coupled receptor 1 family.

The protein resides in the cell membrane. Functionally, putative pheromone receptor implicated in the regulation of social and reproductive behavior. This Mus musculus (Mouse) protein is Vomeronasal type-1 receptor A11.